Reading from the N-terminus, the 480-residue chain is Caspase-8 (480 aa).

Positions 1-218 are excised as a propeptide; the sequence is MDFQSCLYAI…ELCDSPREQD (218 aa). DED domains are found at residues 3–80 and 101–177; these read FQSC…NFLD and YRVM…KIED. Phosphoserine occurs at positions 188 and 213. Lys226 is subject to N6-acetyllysine. His319 is a catalytic residue. Residue Tyr336 is modified to Phosphotyrosine. Residue Cys362 is part of the active site. Residues 377 to 387 constitute a propeptide that is removed on maturation; sequence FEQQNHTLEVD. The residue at position 389 (Ser389) is a Phosphoserine; by CDK1.

This sequence belongs to the peptidase C14A family. Heterotetramer that consists of two anti-parallel arranged heterodimers, each one formed by a 18 kDa (p18) and a 10 kDa (p10) subunit. Component of the death-induced signaling complex (DISC) composed of cell surface receptor FAS/CD95 or TNFRSF1A, adapter protein FADD and the CASP8 protease; recruitment of CASP8 to the complex is required for processing of CASP8 into the p18 and p10 subunits. Component of the AIM2 PANoptosome complex, a multiprotein complex that drives inflammatory cell death (PANoptosis). Interacts with CFLAR and PEA15. Interacts with RFFL and RNF34; negatively regulate CASP8 through proteasomal degradation. Interacts with TNFAIP8L2. Interacts with CASP8AP2. Interacts with NOL3; decreases CASP8 activity in a mitochondria localization- and phosphorylation-dependent manner and this interaction is dissociated by calcium. Interacts with UBR2. Interacts with RIPK1. Interacts with stimulated TNFRSF10B; this interaction is followed by CASP8 proteolytic cleavage and activation. Generation of the subunits requires association with the death-inducing signaling complex (DISC), whereas additional processing is likely due to the autocatalytic activity of the activated protease. GZMB and CASP10 can be involved in these processing events. Post-translationally, (Microbial infection) Proteolytically cleaved by the cowpox virus CRMA death inhibitory protein. In terms of processing, phosphorylation on Ser-389 during mitosis by CDK1 inhibits activation by proteolysis and prevents apoptosis. This phosphorylation occurs in cancer cell lines, as well as in primary breast tissues and lymphocytes. In terms of tissue distribution, expressed in a wide variety of tissues. Highest expression in spleen, thymus, lung, liver and kidney. Lower expression in heart, brain, testis and skeletal muscle.

The protein resides in the cytoplasm. The protein localises to the nucleus. It catalyses the reaction Strict requirement for Asp at position P1 and has a preferred cleavage sequence of (Leu/Asp/Val)-Glu-Thr-Asp-|-(Gly/Ser/Ala).. With respect to regulation, CASP8 activity is restricted by RIPK1. Its activity is regulated as follows. (Microbial infection) Inhibited by baculovirus p35 protein P35. Its function is as follows. Thiol protease that plays a key role in programmed cell death by acting as a molecular switch for apoptosis, necroptosis and pyroptosis, and is required to prevent tissue damage during embryonic development and adulthood. Initiator protease that induces extrinsic apoptosis by mediating cleavage and activation of effector caspases responsible for FAS/CD95-mediated and TNFRSF1A-induced cell death. Cleaves and activates effector caspases CASP3, CASP4, CASP6, CASP7, CASP9 and CASP10. Binding to the adapter molecule FADD recruits it to either receptor FAS/CD95 or TNFRSF1A. The resulting aggregate called the death-inducing signaling complex (DISC) performs CASP8 proteolytic activation. The active dimeric enzyme is then liberated from the DISC and free to activate downstream apoptotic proteases. Proteolytic fragments of the N-terminal propeptide (termed CAP3, CAP5 and CAP6) are likely retained in the DISC. In addition to extrinsic apoptosis, also acts as a negative regulator of necroptosis: acts by cleaving RIPK1 at 'Asp-325', which is crucial to inhibit RIPK1 kinase activity, limiting TNF-induced apoptosis, necroptosis and inflammatory response. Also able to initiate pyroptosis by mediating cleavage and activation of gasdermin-C and -D (GSDMC and GSDMD, respectively): gasdermin cleavage promotes release of the N-terminal moiety that binds to membranes and forms pores, triggering pyroptosis. Initiates pyroptosis following inactivation of MAP3K7/TAK1. Also acts as a regulator of innate immunity by mediating cleavage and inactivation of N4BP1 downstream of TLR3 or TLR4, thereby promoting cytokine production. May participate in the Granzyme B (GZMB) cell death pathways. Cleaves PARP1 and PARP2. In Mus musculus (Mouse), this protein is Caspase-8.